A 329-amino-acid polypeptide reads, in one-letter code: ADP-L-glycero-D-manno-heptose-6-epimerase (329 aa).

Residues 10–11 (FI), 31–32 (DD), Lys38, Lys53, 74–78 (QGACS), and Asn91 each bind NADP(+). Catalysis depends on Tyr138, which acts as the Proton acceptor. Lys142 provides a ligand contact to NADP(+). Asn167 contributes to the substrate binding site. Val168 and Lys176 together coordinate NADP(+). Lys176 serves as the catalytic Proton acceptor. Residues Arg178, His185, 199–202 (FAGW), Arg212, and Tyr291 contribute to the substrate site.

The protein belongs to the NAD(P)-dependent epimerase/dehydratase family. HldD subfamily. As to quaternary structure, homopentamer. NADP(+) serves as cofactor.

The catalysed reaction is ADP-D-glycero-beta-D-manno-heptose = ADP-L-glycero-beta-D-manno-heptose. It participates in nucleotide-sugar biosynthesis; ADP-L-glycero-beta-D-manno-heptose biosynthesis; ADP-L-glycero-beta-D-manno-heptose from D-glycero-beta-D-manno-heptose 7-phosphate: step 4/4. It functions in the pathway bacterial outer membrane biogenesis; LPS core biosynthesis. Functionally, catalyzes the interconversion between ADP-D-glycero-beta-D-manno-heptose and ADP-L-glycero-beta-D-manno-heptose via an epimerization at carbon 6 of the heptose. This is ADP-L-glycero-D-manno-heptose-6-epimerase from Bordetella pertussis (strain Tohama I / ATCC BAA-589 / NCTC 13251).